The chain runs to 295 residues: GTPase Era (295 aa).

The 168-residue stretch at 3–170 (KSGFVTIVGR…VDLMKTELPE (168 aa)) folds into the Era-type G domain. Residues 11–18 (GRPNVGKS) form a G1 region. 11–18 (GRPNVGKS) is a GTP binding site. Residues 37–41 (QTTRN) form a G2 region. Residues 58–61 (DTPG) are G3. Residues 58 to 62 (DTPGI) and 120 to 123 (NKID) contribute to the GTP site. A G4 region spans residues 120–123 (NKID). A G5 region spans residues 149–151 (IAA). The 78-residue stretch at 201 to 278 (LRDEVPHGIA…NVKIWVKVRK (78 aa)) folds into the KH type-2 domain.

This sequence belongs to the TRAFAC class TrmE-Era-EngA-EngB-Septin-like GTPase superfamily. Era GTPase family. Monomer.

It is found in the cytoplasm. Its subcellular location is the cell membrane. Functionally, an essential GTPase that binds both GDP and GTP, with rapid nucleotide exchange. Plays a role in 16S rRNA processing and 30S ribosomal subunit biogenesis and possibly also in cell cycle regulation and energy metabolism. The protein is GTPase Era of Clostridium botulinum (strain Alaska E43 / Type E3).